The primary structure comprises 328 residues: Zinc transporter ZIP13 (328 aa).

Topologically, residues 1 to 7 (MPGCPCP) are lumenal. A helical membrane pass occupies residues 8 to 28 (GCGMAGPRLLFLTALALELLG). Residues 29-68 (RAGGSQPALRSRGTATACRLDNKESESWGALLSGERLDTW) lie on the Cytoplasmic side of the membrane. The helical transmembrane segment at 69 to 89 (ICSLLGSLMVGLSGVFPLLVI) threads the bilayer. At 90–108 (PLEMGTMLRSEAGAWHLKQ) the chain is on the lumenal side. A helical transmembrane segment spans residues 109-129 (LLSFALGGLLGNVFLHLLPEA). Topologically, residues 130-149 (WAYTCSASPGGEGQSLQQQQ) are cytoplasmic. Residues 150-170 (QLGLWVIAGILTFLALEKMFL) form a helical membrane-spanning segment. Over 171-199 (DSKEEGTSQVSGYLNLLANTIDNFTHGLA) the chain is Lumenal. A helical membrane pass occupies residues 200-220 (VAASFLVSKKIGLLTTMAILL). The XEXPHE-motif motif lies at 221 to 226 (HEIPHE). The Cytoplasmic portion of the chain corresponds to 221-242 (HEIPHEVGDFAILLRAGFDRWS). A helical membrane pass occupies residues 243–263 (AAKLQLSTALGGLLGAGFAIC). The Lumenal portion of the chain corresponds to 264–273 (TQSPKGVEET). The helical transmembrane segment at 274 to 294 (AAWVLPFTSGGFLYIALVNVL) threads the bilayer. Topologically, residues 295 to 306 (PDLLEEEDPWRS) are cytoplasmic. The helical transmembrane segment at 307-327 (LQQLLLLCAGIVVMVLFSLFV) threads the bilayer. A topological domain (lumenal) is located at residue Asp328.

This sequence belongs to the ZIP transporter (TC 2.A.5) family. As to quaternary structure, homodimer.

The protein localises to the golgi apparatus membrane. Its subcellular location is the cytoplasmic vesicle membrane. It is found in the endoplasmic reticulum membrane. The catalysed reaction is Zn(2+)(in) = Zn(2+)(out). Functions as a zinc transporter transporting Zn(2+) from the Golgi apparatus to the cytosol and thus influences the zinc level at least in areas of the cytosol. May regulate beige adipocyte differentiation. The protein is Zinc transporter ZIP13 of Pongo abelii (Sumatran orangutan).